The primary structure comprises 419 residues: 3-isopropylmalate dehydratase large subunit (419 aa).

[4Fe-4S] cluster-binding residues include Cys-300, Cys-360, and Cys-363.

The protein belongs to the aconitase/IPM isomerase family. LeuC type 2 subfamily. Heterodimer of LeuC and LeuD. Requires [4Fe-4S] cluster as cofactor.

The enzyme catalyses (2R,3S)-3-isopropylmalate = (2S)-2-isopropylmalate. Its pathway is amino-acid biosynthesis; L-leucine biosynthesis; L-leucine from 3-methyl-2-oxobutanoate: step 2/4. Catalyzes the isomerization between 2-isopropylmalate and 3-isopropylmalate, via the formation of 2-isopropylmaleate. The chain is 3-isopropylmalate dehydratase large subunit from Nitratidesulfovibrio vulgaris (strain DP4) (Desulfovibrio vulgaris).